A 330-amino-acid polypeptide reads, in one-letter code: ADP-L-glycero-D-manno-heptose-6-epimerase (330 aa).

NADP(+) contacts are provided by residues 11–12 (FI), 32–33 (DN), Lys39, Lys54, 75–79 (EGACS), and Asn92. Residue Tyr139 is the Proton acceptor of the active site. Lys143 lines the NADP(+) pocket. Asn168 is a substrate binding site. Positions 169 and 177 each coordinate NADP(+). The active-site Proton acceptor is Lys177. Substrate contacts are provided by residues Arg179, His186, 200-203 (FGEY), Arg213, and Tyr292.

Belongs to the NAD(P)-dependent epimerase/dehydratase family. HldD subfamily. In terms of assembly, homopentamer. Requires NADP(+) as cofactor.

The catalysed reaction is ADP-D-glycero-beta-D-manno-heptose = ADP-L-glycero-beta-D-manno-heptose. It participates in nucleotide-sugar biosynthesis; ADP-L-glycero-beta-D-manno-heptose biosynthesis; ADP-L-glycero-beta-D-manno-heptose from D-glycero-beta-D-manno-heptose 7-phosphate: step 4/4. Its function is as follows. Catalyzes the interconversion between ADP-D-glycero-beta-D-manno-heptose and ADP-L-glycero-beta-D-manno-heptose via an epimerization at carbon 6 of the heptose. This chain is ADP-L-glycero-D-manno-heptose-6-epimerase, found in Burkholderia pseudomallei (strain 1026b).